Reading from the N-terminus, the 199-residue chain is Probable molybdenum cofactor guanylyltransferase (199 aa).

Residues 8–10 (LAG), lysine 20, aspartate 65, and aspartate 96 contribute to the GTP site. Aspartate 96 contacts Mg(2+).

The protein belongs to the MobA family. Mg(2+) is required as a cofactor.

It is found in the cytoplasm. The catalysed reaction is Mo-molybdopterin + GTP + H(+) = Mo-molybdopterin guanine dinucleotide + diphosphate. Its function is as follows. Transfers a GMP moiety from GTP to Mo-molybdopterin (Mo-MPT) cofactor (Moco or molybdenum cofactor) to form Mo-molybdopterin guanine dinucleotide (Mo-MGD) cofactor. The chain is Probable molybdenum cofactor guanylyltransferase from Bacillus subtilis (strain 168).